A 73-amino-acid polypeptide reads, in one-letter code: UPF0352 protein HD_1515 (73 aa).

It belongs to the UPF0352 family.

The polypeptide is UPF0352 protein HD_1515 (Haemophilus ducreyi (strain 35000HP / ATCC 700724)).